Consider the following 244-residue polypeptide: Uridylate kinase (244 aa).

17 to 20 (KVSG) contributes to the ATP binding site. The tract at residues 25-30 (GEKGFG) is involved in allosteric activation by GTP. Gly59 contributes to the UMP binding site. ATP is bound by residues Gly60 and Arg64. UMP is bound by residues Asp80 and 141–148 (VGNPFFTT). 4 residues coordinate ATP: Thr168, Gln169, Tyr174, and Asp177.

The protein belongs to the UMP kinase family. In terms of assembly, homohexamer.

The protein resides in the cytoplasm. The catalysed reaction is UMP + ATP = UDP + ADP. It functions in the pathway pyrimidine metabolism; CTP biosynthesis via de novo pathway; UDP from UMP (UMPK route): step 1/1. With respect to regulation, allosterically activated by GTP. Inhibited by UTP. In terms of biological role, catalyzes the reversible phosphorylation of UMP to UDP. The sequence is that of Uridylate kinase from Ehrlichia canis (strain Jake).